A 71-amino-acid chain; its full sequence is uncharacterized protein (71 aa).

The disordered stretch occupies residues 23–71; the sequence is ENEKAGQSEEYDDDDKEENKKRRRNNGRRGPPEKKKSRRGGEEQTQRII. The span at 52–71 shows a compositional bias: basic and acidic residues; sequence GPPEKKKSRRGGEEQTQRII.

This is an uncharacterized protein from Caenorhabditis elegans.